Consider the following 95-residue polypeptide: Acylphosphatase (95 aa).

An Acylphosphatase-like domain is found at 7–95 (CTMAWVYGSV…RSWDKFAILY (89 aa)). Residues R22 and N40 contribute to the active site.

This sequence belongs to the acylphosphatase family.

The enzyme catalyses an acyl phosphate + H2O = a carboxylate + phosphate + H(+). This Klebsiella pneumoniae subsp. pneumoniae (strain ATCC 700721 / MGH 78578) protein is Acylphosphatase (acyP).